The primary structure comprises 413 residues: von Willebrand factor A domain-containing protein 1 (413 aa).

The signal sequence occupies residues 1-20 (MLPWTVIGLALSLRLARSGA). Residues 32–211 (DLLFLLDSSA…ALRGSILDAM (180 aa)) enclose the VWFA domain. Phosphoserine occurs at positions 72, 78, and 91. Fibronectin type-III domains follow at residues 212 to 302 (WPQQ…TLPE) and 305 to 395 (GPEL…TPEG). N262 carries N-linked (GlcNAc...) asparagine glycosylation. The interval 385–413 (ALSAKACTPEGERSRAPRPQPQRTGGREP) is disordered.

As to quaternary structure, homodimer or homomultimer; disulfide-linked. Interacts with HSPG2. Post-translationally, N-glycosylated.

The protein localises to the secreted. The protein resides in the extracellular space. Its subcellular location is the extracellular matrix. It is found in the basement membrane. Promotes matrix assembly. Involved in the organization of skeletal muscles and in the formation of neuromuscular junctions. The sequence is that of von Willebrand factor A domain-containing protein 1 (VWA1) from Bos taurus (Bovine).